The primary structure comprises 1088 residues: DNA-directed RNA polymerase subunit beta (1088 aa).

This sequence belongs to the RNA polymerase beta chain family. In plastids the minimal PEP RNA polymerase catalytic core is composed of four subunits: alpha, beta, beta', and beta''. When a (nuclear-encoded) sigma factor is associated with the core the holoenzyme is formed, which can initiate transcription.

The protein resides in the plastid. It is found in the chloroplast. It catalyses the reaction RNA(n) + a ribonucleoside 5'-triphosphate = RNA(n+1) + diphosphate. Functionally, DNA-dependent RNA polymerase catalyzes the transcription of DNA into RNA using the four ribonucleoside triphosphates as substrates. The protein is DNA-directed RNA polymerase subunit beta of Ostreococcus tauri.